The chain runs to 1111 residues: Isoleucine--tRNA ligase (1111 aa).

The 'HIGH' region signature appears at 52–62; it reads PFANGLPHYGH. The short motif at 645–649 is the 'KMSKS' region element; the sequence is KLSKR. An ATP-binding site is contributed by Lys-648.

It belongs to the class-I aminoacyl-tRNA synthetase family. IleS type 2 subfamily. As to quaternary structure, monomer. Requires Zn(2+) as cofactor.

It is found in the cytoplasm. It carries out the reaction tRNA(Ile) + L-isoleucine + ATP = L-isoleucyl-tRNA(Ile) + AMP + diphosphate. Functionally, catalyzes the attachment of isoleucine to tRNA(Ile). As IleRS can inadvertently accommodate and process structurally similar amino acids such as valine, to avoid such errors it has two additional distinct tRNA(Ile)-dependent editing activities. One activity is designated as 'pretransfer' editing and involves the hydrolysis of activated Val-AMP. The other activity is designated 'posttransfer' editing and involves deacylation of mischarged Val-tRNA(Ile). This chain is Isoleucine--tRNA ligase, found in Wolbachia pipientis wMel.